Reading from the N-terminus, the 624-residue chain is Multicopper oxidase elcG (624 aa).

A signal peptide spans 1–18 (MACNILNFLTGLLSLSST). Plastocyanin-like domains follow at residues 48-160 (PGRA…IERG) and 216-373 (CMDA…TIRI). N-linked (GlcNAc...) asparagine glycosylation is present at asparagine 65. Residues histidine 96, histidine 98, histidine 140, and histidine 142 each coordinate Cu cation. Asparagine 271, asparagine 296, and asparagine 464 each carry an N-linked (GlcNAc...) asparagine glycan. The region spanning 474 to 603 (FLFQDPSQIE…GGMGVVILDG (130 aa)) is the Plastocyanin-like 3 domain. Positions 511, 514, 516, 585, 586, 587, and 591 each coordinate Cu cation.

It belongs to the multicopper oxidase family.

It functions in the pathway secondary metabolite biosynthesis. Its function is as follows. Multicopper oxidase; part of the gene cluster that mediates the biosynthesis of elsinochrome C, a perelyenequinone phytotoxin structurally similar to cercosporin. The first step of elsinochrome C biosynthesis is performed by the polyketide synthase elcA which catalyzes the formation of nor-toralactone. The starter unit acyltransferase (SAT) domain of elcA initiates polyketide extension by the selective utilization of acetyl-CoA, which is elongated to the heptaketide in the beta-ketoacyl synthase (KS) domain by successive condensations with six malonyl units introduced by the malonyl acyltransferase (MAT) domain. The product template (PT) domain catalyzes C4-C9 and C2-C11 aldol cyclizations and dehydrations to a trihydroxynaphthalene, which is thought to be delivered to the thioesterase (TE) domain for product release. The bifunctional enzyme elcB then methylates nor-toralactone to toralactone before conducting an unusual oxidative aromatic ring opening. The next step in perylenequinone biosynthesis is an O-methylation at the nascent OH-6 of the elcB product performed by the O-methyltransferase elcD. The oxidative coupling of the two monomeric naphthol units in perylenequinone biosynthesis is catalyzed by the FAD-dependent monooxygenase elcE and the multicopper oxidase elcG. ElcG might catalyze the first intermolecular coupling in a regio- and stereo-selective manner via a phenol radical coupling mechanism and the elcE could forge the second C-C bond intramolecularly via a hydride transfer mechanism. The fasciclin domain-containing protein elcF might also play a role duting this step. The last piece of the puzzle in the biosynthesis of elsinochrome C is the additional annulation by enolate coupling to afford the dihydrobenzo(ghi)perylenequinone system, catalyzed by the FAD-dependent monooxygenase elcH. The sequence is that of Multicopper oxidase elcG from Phaeosphaeria nodorum (strain SN15 / ATCC MYA-4574 / FGSC 10173) (Glume blotch fungus).